Here is a 136-residue protein sequence, read N- to C-terminus: Large-conductance mechanosensitive channel (136 aa).

The next 2 membrane-spanning stretches (helical) occupy residues 9–29 and 79–99; these read AFASRGNVIDMAVGIIIGAAF and IQTVIDFTIIAFAIFMGLKAI.

The protein belongs to the MscL family. Homopentamer.

The protein resides in the cell inner membrane. Functionally, channel that opens in response to stretch forces in the membrane lipid bilayer. May participate in the regulation of osmotic pressure changes within the cell. In Shewanella sp. (strain W3-18-1), this protein is Large-conductance mechanosensitive channel.